Here is a 612-residue protein sequence, read N- to C-terminus: BTB/POZ domain-containing protein 9 (612 aa).

In terms of domain architecture, BTB spans 36–104 (GDVTFVVEKK…IYTGRATLTD (69 aa)). Residues 142-240 (VCMTFDVASL…SLTELLNVVR (99 aa)) form the BACK domain. Positions 559–612 (QQSNQKEDSSEEPGTGDPSTPNQQLDPHAPRAPSASSLPPSPGPNSRSPNQQNQ) are disordered. Residues 589 to 612 (RAPSASSLPPSPGPNSRSPNQQNQ) are compositionally biased toward low complexity.

In terms of tissue distribution, expressed in the brain (at protein level).

The protein is BTB/POZ domain-containing protein 9 (Btbd9) of Mus musculus (Mouse).